The primary structure comprises 489 residues: MFEHDFLALFPEIFLINATIILLIYGVVFSTSKKYDYPPLVRNVGWLGLLSVLITILLVAVGSPLAVANLVYNNLIIDNFTYFCQIFLLLSTASTMVMCLDYFKQESLNAFESIVLILLSTCSMLFMISAYDLIAMYLAIELQSLCFYVIAASKRDSEFSTEAGLKYFILGAFSSGILLFGCSMIYGFTGVTNFEELAKIFTGYEITLFGAQSSGIFMGILFIAVGFLFKITAVPFHMWAPDVYEGSPTIVTAFFSIAPKISILANMLRVFIYSFYDPTWQQLFFFCSIASMILGALAAMAQNKVKRLLAYSSIGHVGYLLIGFSCGTIEGIQSLLIGIFIYVLMTVNVFAIVLALRQNRFKYIADLGALAKTNPILAITLSITMFSYAGIPPLAGFCSKFYLFFAALGCGAYLLALIGVVTSVISCFYYIRFVKIMYFDTPKTWVLYKPMDREKSLLLAITVFFITFFFLYPSPLFLVTHQMALCLCL.

The next 13 membrane-spanning stretches (helical) occupy residues 9–29 (LFPEIFLINATIILLIYGVVF), 47–67 (LGLLSVLITILLVAVGSPLAV), 80–100 (FTYFCQIFLLLSTASTMVMCL), 114–134 (IVLILLSTCSMLFMISAYDLI), 168–188 (FILGAFSSGILLFGCSMIYGF), 216–236 (IFMGILFIAVGFLFKITAVPF), 248–268 (PTIVTAFFSIAPKISILANML), 280–300 (WQQLFFFCSIASMILGALAAM), 309–329 (LAYSSIGHVGYLLIGFSCGTI), 335–355 (LLIGIFIYVLMTVNVFAIVLA), 376–396 (ILAITLSITMFSYAGIPPLAG), 401–421 (FYLFFAALGCGAYLLALIGVV), and 459–479 (LAITVFFITFFFLYPSPLFLV).

It belongs to the complex I subunit 2 family.

Its subcellular location is the mitochondrion inner membrane. It catalyses the reaction a ubiquinone + NADH + 5 H(+)(in) = a ubiquinol + NAD(+) + 4 H(+)(out). In terms of biological role, core subunit of the mitochondrial membrane respiratory chain NADH dehydrogenase (Complex I) that is believed to belong to the minimal assembly required for catalysis. Complex I functions in the transfer of electrons from NADH to the respiratory chain. The immediate electron acceptor for the enzyme is believed to be ubiquinone. The protein is NADH-ubiquinone oxidoreductase chain 2 (ND2) of Marchantia polymorpha (Common liverwort).